The chain runs to 798 residues: Pentatricopeptide repeat-containing protein At5g67570, chloroplastic (798 aa).

Disordered regions lie at residues 1–21 and 50–73; these read MDASVVRFSQSPARVPPEFEP and IQKHNRRTKRETESEAEVYTEAQK. PPR repeat units follow at residues 254-284, 290-324, 340-374, 375-409, 410-444, 445-480, 481-511, 515-545, 553-587, and 588-622; these read SRFVYTKLLSVLGFARRPQEALQIFNQMLGD, DMAAYHCIAVTLGQAGLLKELLKVIERMRQKPTKL, DLVVYNAILNACVPTLQWKAVSWVFVELRKNGLRP, NGATYGLAMEVMLESGKFDRVHDFFRKMKSSGEAP, KAITYKVLVRALWREGKIEEAVEAVRDMEQKGVIG, TGSVYYELACCLCNNGRWCDAMLEVGRMKRLENCRP, LEITFTGLIAASLNGGHVDDCMAIFQYMKDK, NIGTANMMLKVYGRNDMFSEAKELFEEIVSR, NEYTYSFMLEASARSLQWEYFEHVYQTMVLSGYQM, and DQTKHASMLIEASRAGKWSLLEHAFDAVLEDGEIP.

The protein belongs to the PPR family. P subfamily. As to quaternary structure, interacts (via C-terminus) with SIGF (via N-terminus).

The protein localises to the plastid. It is found in the chloroplast. In terms of biological role, involved in the regulation of early chloroplast development and chloroplast gene expression in a SIGF-dependent manner. The chain is Pentatricopeptide repeat-containing protein At5g67570, chloroplastic (DG1) from Arabidopsis thaliana (Mouse-ear cress).